A 115-amino-acid chain; its full sequence is NADH-ubiquinone oxidoreductase chain 3 (115 aa).

3 consecutive transmembrane segments (helical) span residues 3-23, 55-75, and 84-104; these read LMLALLTNFTLATLLVIIAFW, FFLVAITFLLFDLEIALLLPL, and LNTMLTMALFLIILLAVSLAY.

Belongs to the complex I subunit 3 family. Core subunit of respiratory chain NADH dehydrogenase (Complex I) which is composed of 45 different subunits. Interacts with TMEM186. Interacts with TMEM242.

It localises to the mitochondrion inner membrane. It catalyses the reaction a ubiquinone + NADH + 5 H(+)(in) = a ubiquinol + NAD(+) + 4 H(+)(out). Core subunit of the mitochondrial membrane respiratory chain NADH dehydrogenase (Complex I) which catalyzes electron transfer from NADH through the respiratory chain, using ubiquinone as an electron acceptor. Essential for the catalytic activity of complex I. The sequence is that of NADH-ubiquinone oxidoreductase chain 3 from Bos indicus (Zebu).